The following is a 117-amino-acid chain: Replication initiation control protein YabA (117 aa).

Positions 45–81 (NQHLRERLDQSDRDKSSETENDSAQKPGHSDIGEGHD) are disordered. 2 stretches are compositionally biased toward basic and acidic residues: residues 46 to 62 (QHLR…KSSE) and 72 to 81 (GHSDIGEGHD). H92, C94, C107, and C110 together coordinate Zn(2+).

This sequence belongs to the YabA family. As to quaternary structure, homotetramer. Interacts with both DnaA and DnaN, acting as a bridge between these two proteins. Requires Zn(2+) as cofactor.

It localises to the cytoplasm. Its subcellular location is the nucleoid. Its function is as follows. Involved in control of chromosome replication initiation. Inhibits the cooperative binding of DnaA to the oriC region, thus negatively regulating initiation of chromosome replication. Inhibits the ability of DnaA-ATP to form a helix on DNA; does not disassemble preformed DnaA-DNA helices. Decreases the residence time of DnaA on the chromosome at its binding sites (oriC, replication forks and promoter-binding sites). Tethers DnaA to the replication machinery via the DNA polymerase beta sliding clamp subunit (dnaN). Associates with oriC and other DnaA targets on the chromosome in a DnaA-dependent manner. This Bacillus pumilus (strain SAFR-032) protein is Replication initiation control protein YabA.